The following is a 242-amino-acid chain: UPF0309 protein BSUIS_B0903 (242 aa).

One can recognise an SIS domain in the interval 30–214; it reads AADLIAAAAR…ARLVGEGDAP (185 aa).

It belongs to the UPF0309 family.

This Brucella suis (strain ATCC 23445 / NCTC 10510) protein is UPF0309 protein BSUIS_B0903.